A 371-amino-acid chain; its full sequence is Queuine tRNA-ribosyltransferase (371 aa).

The Proton acceptor role is filled by Asp90. Residues 90–94 (DSGGF), Asp144, Gln188, and Gly215 each bind substrate. Residues 246–252 (GVGTPED) are RNA binding. Asp265 (nucleophile) is an active-site residue. Residues 270–274 (TRNAR) form an RNA binding; important for wobble base 34 recognition region. Zn(2+)-binding residues include Cys303, Cys305, Cys308, and His334.

Belongs to the queuine tRNA-ribosyltransferase family. As to quaternary structure, homodimer. Within each dimer, one monomer is responsible for RNA recognition and catalysis, while the other monomer binds to the replacement base PreQ1. Zn(2+) is required as a cofactor.

The catalysed reaction is 7-aminomethyl-7-carbaguanine + guanosine(34) in tRNA = 7-aminomethyl-7-carbaguanosine(34) in tRNA + guanine. It participates in tRNA modification; tRNA-queuosine biosynthesis. Catalyzes the base-exchange of a guanine (G) residue with the queuine precursor 7-aminomethyl-7-deazaguanine (PreQ1) at position 34 (anticodon wobble position) in tRNAs with GU(N) anticodons (tRNA-Asp, -Asn, -His and -Tyr). Catalysis occurs through a double-displacement mechanism. The nucleophile active site attacks the C1' of nucleotide 34 to detach the guanine base from the RNA, forming a covalent enzyme-RNA intermediate. The proton acceptor active site deprotonates the incoming PreQ1, allowing a nucleophilic attack on the C1' of the ribose to form the product. After dissociation, two additional enzymatic reactions on the tRNA convert PreQ1 to queuine (Q), resulting in the hypermodified nucleoside queuosine (7-(((4,5-cis-dihydroxy-2-cyclopenten-1-yl)amino)methyl)-7-deazaguanosine). In Neisseria gonorrhoeae (strain ATCC 700825 / FA 1090), this protein is Queuine tRNA-ribosyltransferase.